Here is a 387-residue protein sequence, read N- to C-terminus: MSGGKKKSSFQITSVTTDYEGPGSPGASDSPVPPALAGPPPRLPNGDPNPDPGGRGTPRNGSPPPGAPASRFRVVKLPQGLGEPYRRGRWTCVDVYERDLEPPSFGRLLEGIRGASGGTGGRSLDSRLELASLGISTPIPQPGLSQGPTSWLRPPPTSPGPQARSFTGGLGQLAGPGKAKVETPPLSASPPQQRPPGPGTGDSAQTLPSLRVEVESGGSAAATPPLSRRRDGAVRLRMELVAPAETGKVPPTDSRPNSPALYFDASLVHKSPDPFGAAAAQSLSLARSMLAISGHLDSDDDSGSGSLVGIDNKIEQAMDLVKSHLMFAVREEVEVLKEQIRDLAERNAALEQENGLLRALASPEQLAQLPSSGLPRLGPSAPNGPSI.

2 disordered regions span residues 1–85 (MSGG…GEPY) and 135–232 (ISTP…RRDG). Residues 31 to 51 (PVPPALAGPPPRLPNGDPNPD) are compositionally biased toward pro residues. Threonine 57 carries the phosphothreonine modification. Residues serine 62 and serine 165 each carry the phosphoserine modification. Residue threonine 183 is modified to Phosphothreonine. Serine 187, serine 189, and serine 219 each carry phosphoserine. A Phosphothreonine modification is found at threonine 223. Residues serine 254, serine 258, and serine 271 each carry the phosphoserine modification. Residues 336–357 (LKEQIRDLAERNAALEQENGLL) form a leucine-zipper region. Serine 362 is modified (phosphoserine). The disordered stretch occupies residues 368–387 (QLPSSGLPRLGPSAPNGPSI).

It belongs to the TSC-22/Dip/Bun family. As to quaternary structure, forms a homodimer or heterodimer. Forms a heterodimer with TSC22D1 isoforms 1 and 2. Interacts with NRBP1. In terms of tissue distribution, expressed in the liver (at protein level). Expressed in Purkinje cells and proliferating cerebellar granular neurons (at protein level). Expressed in the cortex, medulla and papilla of the kidney.

The protein resides in the nucleus. The protein localises to the cytoplasm. It is found in the cell projection. It localises to the dendrite. Its subcellular location is the synapse. Functionally, binds DNA and acts as a transcriptional repressor. Involved in the regulation of systematic glucose homeostasis and insulin sensitivity, via transcriptional repression of downstream insulin signaling targets such as OBP2A/LCN13. Acts as a negative regulator of lipogenic gene expression in hepatocytes and thereby mediates the control of very low-density lipoprotein release. May play a role in neurite elongation and survival. The polypeptide is TSC22 domain family protein 4 (Mus musculus (Mouse)).